The chain runs to 487 residues: Malonate-semialdehyde dehydrogenase (487 aa).

Residues Ala-150, Phe-152, Lys-176, Glu-179, Arg-180, Ser-229, and Thr-251 each contribute to the NAD(+) site. Cys-284 (nucleophile) is an active-site residue. Glu-382 contacts NAD(+).

The protein belongs to the aldehyde dehydrogenase family. IolA subfamily. As to quaternary structure, homotetramer.

It catalyses the reaction 3-oxopropanoate + NAD(+) + CoA + H2O = hydrogencarbonate + acetyl-CoA + NADH + H(+). The enzyme catalyses 2-methyl-3-oxopropanoate + NAD(+) + CoA + H2O = propanoyl-CoA + hydrogencarbonate + NADH + H(+). It functions in the pathway polyol metabolism; myo-inositol degradation into acetyl-CoA; acetyl-CoA from myo-inositol: step 7/7. Functionally, catalyzes the oxidation of malonate semialdehyde (MSA) and methylmalonate semialdehyde (MMSA) into acetyl-CoA and propanoyl-CoA, respectively. Is involved in a myo-inositol catabolic pathway. Bicarbonate, and not CO2, is the end-product of the enzymatic reaction. The sequence is that of Malonate-semialdehyde dehydrogenase from Bacillus subtilis (strain 168).